Reading from the N-terminus, the 435-residue chain is Adenylosuccinate synthetase (435 aa).

GTP contacts are provided by residues 11 to 17 (GDEGKGK) and 39 to 41 (GHT). Aspartate 12 acts as the Proton acceptor in catalysis. Mg(2+)-binding residues include aspartate 12 and glycine 39. IMP is bound by residues 12 to 15 (DEGK), 37 to 40 (NAGH), threonine 128, arginine 142, glutamine 223, threonine 238, and arginine 302. The active-site Proton donor is the histidine 40. 298 to 304 (SVTGRPR) is a substrate binding site. GTP is bound by residues arginine 304, 330–332 (KLD), and 412–414 (STG).

The protein belongs to the adenylosuccinate synthetase family. Homodimer. Mg(2+) is required as a cofactor.

The protein localises to the cytoplasm. It carries out the reaction IMP + L-aspartate + GTP = N(6)-(1,2-dicarboxyethyl)-AMP + GDP + phosphate + 2 H(+). Its pathway is purine metabolism; AMP biosynthesis via de novo pathway; AMP from IMP: step 1/2. Functionally, plays an important role in the de novo pathway of purine nucleotide biosynthesis. Catalyzes the first committed step in the biosynthesis of AMP from IMP. The protein is Adenylosuccinate synthetase of Coxiella burnetii (strain RSA 493 / Nine Mile phase I).